Here is a 235-residue protein sequence, read N- to C-terminus: N-alpha-acetyltransferase 10 (235 aa).

Position 1 is an N-acetylmethionine (Met1). The interval 1–58 (MNIRNARPEDLMNMQHCNLLCLPENYQMKYYFYHGLSWPQLSYIAEDENGKIVGYVLA) is interaction with NAA15. In terms of domain architecture, N-acetyltransferase spans 1–152 (MNIRNARPED…DAYAMKRDLT (152 aa)). The residue at position 136 (Lys136) is an N6-acetyllysine; by autocatalysis. Basic and acidic residues predominate over residues 196–213 (EEKGLAAEDSGGDSKDLS). The segment at 196 to 235 (EEKGLAAEDSGGDSKDLSEVSETTESTDVKDSSEASDSAS) is disordered. Ser205 is modified (phosphoserine). The residue at position 209 (Ser209) is a Phosphoserine; by IKKB. 2 positions are modified to phosphoserine: Ser213 and Ser216.

Belongs to the acetyltransferase family. ARD1 subfamily. In terms of assembly, component of the N-terminal acetyltransferase A complex (also called the NatA complex) composed of NAA10 and NAA15. Interacts with NAA15. Component of the N-terminal acetyltransferase A (NatA)/HYPK complex at least composed of NAA10, NAA15 and HYPK, which has N-terminal acetyltransferase activity. In complex with NAA15, interacts with HYPK. Component of the N-terminal acetyltransferase E (NatE) complex at least composed of NAA10, NAA15 and NAA50. Within the complex interacts with NAA15; the interaction is required for binding to NAAT50. Interacts with NAAT50. The interaction of the NatA complex with NAA50 reduces the acetylation activity of the NatA complex. Component of the N-terminal acetyltransferase E (NatE)/HYPK complex at least composed of NAA10, NAA15, NAA50 and HYPK. In complex with NAA15, interacts with HYPK; the interaction with HYPK reduces the capacity of the NatA complex to interact with NAA50. Interacts with HIF1A (via its ODD domain); the interaction increases HIF1A protein stability during normoxia, an down-regulates it when induced by hypoxia. Interacts with the ribosome. Binds to MYLK. Interacts with NAA16. Interacts (via its C-terminal domain) with TSC2, leading to its acetylation. Interacts with IKBKB. Interacts with HSPA1A and HSPA1B leading to its acetylation. Post-translationally, cleaved by caspases during apoptosis. In terms of processing, phosphorylation by IKBKB/IKKB at Ser-209 destabilises NAA10 and promotes its proteasome-mediated degradation. Autoacetylated at Lys-136 which stimulates its catalytic activity. Ubiquitous.

It is found in the cytoplasm. The protein resides in the nucleus. The catalysed reaction is N-terminal glycyl-[protein] + acetyl-CoA = N-terminal N(alpha)-acetylglycyl-[protein] + CoA + H(+). The enzyme catalyses N-terminal L-alanyl-[protein] + acetyl-CoA = N-terminal N(alpha)-acetyl-L-alanyl-[protein] + CoA + H(+). It catalyses the reaction N-terminal L-seryl-[protein] + acetyl-CoA = N-terminal N(alpha)-acetyl-L-seryl-[protein] + CoA + H(+). It carries out the reaction N-terminal L-valyl-[protein] + acetyl-CoA = N-terminal N(alpha)-acetyl-L-valyl-[protein] + CoA + H(+). The catalysed reaction is N-terminal L-cysteinyl-[protein] + acetyl-CoA = N-terminal N(alpha)-acetyl-L-cysteinyl-[protein] + CoA + H(+). The enzyme catalyses N-terminal L-threonyl-[protein] + acetyl-CoA = N-terminal N(alpha)-acetyl-L-threonyl-[protein] + CoA + H(+). In terms of biological role, catalytic subunit of the N-terminal acetyltransferase A (NatA) complex which displays alpha (N-terminal) acetyltransferase activity. Acetylates amino termini that are devoid of initiator methionine. The alpha (N-terminal) acetyltransferase activity may be important for vascular, hematopoietic and neuronal growth and development. Without NAA15, displays epsilon (internal) acetyltransferase activity towards HIF1A, thereby promoting its degradation. Represses MYLK kinase activity by acetylation, and thus represses tumor cell migration. Acetylates, and stabilizes TSC2, thereby repressing mTOR activity and suppressing cancer development. Acetylates HSPA1A and HSPA1B at 'Lys-77' which enhances its chaperone activity and leads to preferential binding to co-chaperone HOPX. Acetylates HIST1H4A. Acts as a negative regulator of sister chromatid cohesion during mitosis. The chain is N-alpha-acetyltransferase 10 (Naa10) from Mus musculus (Mouse).